The chain runs to 366 residues: NADH-quinone oxidoreductase subunit D (366 aa).

The protein belongs to the complex I 49 kDa subunit family. As to quaternary structure, NDH-1 is composed of 14 different subunits. Subunits NuoB, C, D, E, F, and G constitute the peripheral sector of the complex.

The protein localises to the cell membrane. It carries out the reaction a quinone + NADH + 5 H(+)(in) = a quinol + NAD(+) + 4 H(+)(out). NDH-1 shuttles electrons from NADH, via FMN and iron-sulfur (Fe-S) centers, to quinones in the respiratory chain. The immediate electron acceptor for the enzyme in this species is believed to be a menaquinone. Couples the redox reaction to proton translocation (for every two electrons transferred, four hydrogen ions are translocated across the cytoplasmic membrane), and thus conserves the redox energy in a proton gradient. The polypeptide is NADH-quinone oxidoreductase subunit D (Bacillus anthracis).